Here is a 667-residue protein sequence, read N- to C-terminus: WD repeat-containing protein 48 homolog (667 aa).

WD repeat units follow at residues 26–65, 71–110, 113–152, 164–203, 206–245, 248–287, 290–329, and 349–388; these read QHRN…NDKY, HHND…CMST, THRD…ALTA, GSKD…RSMK, GHTE…CIQT, VHKE…NKML, EEKA…RCTL, and KGGA…KKEE. The disordered stretch occupies residues 591–615; it reads ETTPSGGNANNSLQNSQSDANSEGS.

The protein belongs to the WD repeat WDR48 family. As to quaternary structure, catalytic component of the Usp12-46 deubiquitylase complex consisting of Usp12-46, Wdr20 and Uaf1; regulatory subunit that, together wtih Wdr20, stabilizes Usp12-46. The Usp12-46 deubiquitylase complex associates with arr/arrow; the interaction leads to deubiquitination and stabilization of arr/arrow.

Regulatory component of the Usp12-46 deubiquitylase complex. activates deubiquitination by increasing the catalytic turnover without increasing the affinity of deubiquitinating enzymes for the substrate. The complex deubiquitylates the wg/wingless-signaling receptor arr/arrow, which stabilizes the receptor and increases its concentration at the cell surface; this enhances the sensitivity of cells to wg/wingless-signal stimulation. This increases the amplitude and spatial range of the signaling response to the wg/wingless morphogen gradient, facilitating the precise concentration-dependent regulation of its target genes. Together with Wdr20 and Usp12-46 required for wg/wingless-mediated signaling in the wing imaginal disc and for wg/wingless-dependent regulation of intestinal stem cell proliferation. This chain is WD repeat-containing protein 48 homolog, found in Drosophila virilis (Fruit fly).